The chain runs to 110 residues: Transmembrane protein 233 (110 aa).

The interval 1–32 (MSQYASRSDSKGALDSSSPEAYTEDDKTEEDI) is disordered. Residues 1–42 (MSQYASRSDSKGALDSSSPEAYTEDDKTEEDIPAPSNYLWLT) lie on the Cytoplasmic side of the membrane. A compositionally biased stretch (acidic residues) spans 22–32 (YTEDDKTEEDI). The helical intramembrane region spans 43-63 (IISCFCPAYPVNIVALVFSIM). The Cytoplasmic segment spans residues 64–85 (SLNSYNDGDYEGARRLGRNAKW). A helical membrane pass occupies residues 86 to 106 (VAIASIIIGLVIIGVSCAVHF). The Extracellular segment spans residues 107–110 (SRNP).

This sequence belongs to the CD225/Dispanin family. As to quaternary structure, interacts with the giant stinging tree toxin ExTxA (P0DQP3). Interacts with Nav1.7/SCN9A. Interacts with Nav1.1/SCN1A, Nav1.2/SCN2A, Nav1.3/SCN3A, Nav1.4/SCN4A, Nav1.5/SCN5A, and Nav1.6/SCN8A. Probably expressed in nociceptive neurons. Detected in dorsal root ganglion neurons.

Its subcellular location is the membrane. In terms of biological role, probable accessory protein of voltage-gated sodium channels. This chain is Transmembrane protein 233, found in Mus musculus (Mouse).